Here is an 89-residue protein sequence, read N- to C-terminus: Small ribosomal subunit protein bS18 (89 aa).

The protein belongs to the bacterial ribosomal protein bS18 family. Part of the 30S ribosomal subunit. Forms a tight heterodimer with protein bS6.

Its function is as follows. Binds as a heterodimer with protein bS6 to the central domain of the 16S rRNA, where it helps stabilize the platform of the 30S subunit. The sequence is that of Small ribosomal subunit protein bS18 from Treponema denticola (strain ATCC 35405 / DSM 14222 / CIP 103919 / JCM 8153 / KCTC 15104).